The following is a 267-amino-acid chain: N-formylglutamate deformylase (267 aa).

The protein belongs to the N-formylglutamate deformylase family. As to quaternary structure, monomer.

The catalysed reaction is N-formyl-L-glutamate + H2O = formate + L-glutamate. The protein operates within amino-acid degradation; L-histidine degradation into L-glutamate; L-glutamate from N-formimidoyl-L-glutamate (deiminase route): step 2/2. Its activity is regulated as follows. Stimulated by Co(2+). Fe(2+) is also a good activator, particularly at lower concentrations, but it inhibits slightly the activity when used at concentrations over 0.1 mM. Other divalent metals tested (Cd(2+), Ca(2+), Mn(2+), Zn(2+), Ni(2+) and Mg(2+)) are not effective activators. Its function is as follows. Catalyzes the hydrolysis of N-formyl-L-glutamate to formate and L-glutamate. The chain is N-formylglutamate deformylase from Pseudomonas putida (Arthrobacter siderocapsulatus).